The sequence spans 252 residues: Adenosylcobinamide-GDP ribazoletransferase (252 aa).

Transmembrane regions (helical) follow at residues 4 to 24, 35 to 55, 65 to 85, 102 to 122, 178 to 198, 201 to 221, and 232 to 252; these read LLLL…LPYI, LVPM…GGMN, SALV…DGAM, VMAD…ILLL, LLPG…VNNH, LITV…AAWF, and TYGA…TILT.

It belongs to the CobS family. Requires Mg(2+) as cofactor.

It is found in the cell inner membrane. The catalysed reaction is alpha-ribazole + adenosylcob(III)inamide-GDP = adenosylcob(III)alamin + GMP + H(+). The enzyme catalyses alpha-ribazole 5'-phosphate + adenosylcob(III)inamide-GDP = adenosylcob(III)alamin 5'-phosphate + GMP + H(+). Its pathway is cofactor biosynthesis; adenosylcobalamin biosynthesis; adenosylcobalamin from cob(II)yrinate a,c-diamide: step 7/7. Functionally, joins adenosylcobinamide-GDP and alpha-ribazole to generate adenosylcobalamin (Ado-cobalamin). Also synthesizes adenosylcobalamin 5'-phosphate from adenosylcobinamide-GDP and alpha-ribazole 5'-phosphate. The polypeptide is Adenosylcobinamide-GDP ribazoletransferase (Trichormus variabilis (strain ATCC 29413 / PCC 7937) (Anabaena variabilis)).